Here is a 117-residue protein sequence, read N- to C-terminus: Immunity protein BC_0921 (117 aa).

In terms of assembly, probably interacts with cognate toxin BC_0920 but not with other non-cognate toxins. The interaction inhibits the toxic activity of BC_0920.

It localises to the cytoplasm. Its function is as follows. Immunity component of an LXG toxin-immunity module. Neutralizes the RNase activity of cognate toxin BC_0920. Probably does not have immunity protein activity on other toxins with the LXG domain. The sequence is that of Immunity protein BC_0921 from Bacillus cereus (strain ATCC 14579 / DSM 31 / CCUG 7414 / JCM 2152 / NBRC 15305 / NCIMB 9373 / NCTC 2599 / NRRL B-3711).